A 239-amino-acid chain; its full sequence is Putative CRISPR-associated endoribonuclease-like protein Cas6nc (239 aa).

It belongs to the CRISPR-associated protein Cas6/Cse3/CasE family. As to quaternary structure, monomer; homodimer when crystallized in the presence of crRNA. Varying the crRNA sequence varies degree of oligomerization and structure.

In terms of biological role, CRISPR (clustered regularly interspaced short palindromic repeat), is an adaptive immune system that provides protection against mobile genetic elements (viruses, transposable elements and conjugative plasmids). CRISPR clusters contain sequences complementary to antecedent mobile elements and target invading nucleic acids. CRISPR clusters are transcribed and processed into CRISPR RNA (crRNA), also called psiRNA (prokaryotic silencing) in this organism (Potential). This is Putative CRISPR-associated endoribonuclease-like protein Cas6nc (cas6nc) from Pyrococcus horikoshii (strain ATCC 700860 / DSM 12428 / JCM 9974 / NBRC 100139 / OT-3).